The sequence spans 460 residues: Allantoinase (460 aa).

The Zn(2+) site is built by H70, H72, K157, H193, H250, and D323. K157 is subject to N6-carboxylysine.

Belongs to the metallo-dependent hydrolases superfamily. Allantoinase family. As to quaternary structure, homotetramer. Zn(2+) serves as cofactor. Post-translationally, carboxylation allows a single lysine to coordinate two zinc ions.

It carries out the reaction (S)-allantoin + H2O = allantoate + H(+). It participates in nitrogen metabolism; (S)-allantoin degradation; allantoate from (S)-allantoin: step 1/1. Its function is as follows. Catalyzes the conversion of allantoin (5-ureidohydantoin) to allantoic acid by hydrolytic cleavage of the five-member hydantoin ring. Involved in the utilization of purines as secondary nitrogen sources, when primary sources are limiting. The sequence is that of Allantoinase (DAL1) from Saccharomyces cerevisiae (strain ATCC 204508 / S288c) (Baker's yeast).